The chain runs to 444 residues: MITTRFAPSPTGFLHVGNIRTALINWLYARHHHGRFVLRIDDTDSERSTEEYTQAIRADLAWLNLNPDVEYSQSKRSELYEIRFESLKAKGRIYPCYETPQELDLKRRIAIGRGLPPIYDRAALNLTIEERSELEEKGIKPHWRFRLDHDHAIKWNDLIRGEQRFDPKLLSDPVIRRADGSWLYLLPSVIDDIDMEITTIVRGEDHVSNTATQIQMFQALEAELPEFAHMALLTGGDAKISKRFGADSVADFKADHIEPIALEALLARIGTSDPVEVLTDLAPLVENFDFSHFSRAPARFDMAELKHLNARILHITPYEQVADRLPEAMDAHSWEVIRPNIDDLSEAAFWWSVVKEDIAKPDLSAEDKAYLVEAMAIAKTLDWSSNPWKEWIDILKKQSGRKGKALFLPLRLALTGQSHGPDMAGLLSLIGHEKAIKRLEQAVK.

A 'HIGH' region motif is present at residues 8–18 (PSPTGFLHVGN). The 'KMSKS' region signature appears at 239-243 (KISKR). Residue Lys-242 coordinates ATP.

The protein belongs to the class-I aminoacyl-tRNA synthetase family. Glutamate--tRNA ligase type 1 subfamily. Monomer.

It is found in the cytoplasm. The catalysed reaction is tRNA(Glu) + L-glutamate + ATP = L-glutamyl-tRNA(Glu) + AMP + diphosphate. Functionally, catalyzes the attachment of glutamate to tRNA(Glu) in a two-step reaction: glutamate is first activated by ATP to form Glu-AMP and then transferred to the acceptor end of tRNA(Glu). The chain is Glutamate--tRNA ligase 1 from Zymomonas mobilis subsp. mobilis (strain ATCC 31821 / ZM4 / CP4).